Consider the following 443-residue polypeptide: 3-phosphoshikimate 1-carboxyvinyltransferase (443 aa).

3-phosphoshikimate contacts are provided by lysine 24, serine 25, and arginine 29. Residue lysine 24 coordinates phosphoenolpyruvate. Glycine 96 and arginine 124 together coordinate phosphoenolpyruvate. Serine 168, glutamine 170, aspartate 316, and lysine 343 together coordinate 3-phosphoshikimate. Glutamine 170 serves as a coordination point for phosphoenolpyruvate. The Proton acceptor role is filled by aspartate 316. Phosphoenolpyruvate is bound by residues arginine 347 and arginine 391.

The protein belongs to the EPSP synthase family. In terms of assembly, monomer.

It localises to the cytoplasm. The enzyme catalyses 3-phosphoshikimate + phosphoenolpyruvate = 5-O-(1-carboxyvinyl)-3-phosphoshikimate + phosphate. It participates in metabolic intermediate biosynthesis; chorismate biosynthesis; chorismate from D-erythrose 4-phosphate and phosphoenolpyruvate: step 6/7. Its function is as follows. Catalyzes the transfer of the enolpyruvyl moiety of phosphoenolpyruvate (PEP) to the 5-hydroxyl of shikimate-3-phosphate (S3P) to produce enolpyruvyl shikimate-3-phosphate and inorganic phosphate. In Dichelobacter nodosus (Bacteroides nodosus), this protein is 3-phosphoshikimate 1-carboxyvinyltransferase.